We begin with the raw amino-acid sequence, 315 residues long: Cytochrome f (315 aa).

A signal peptide spans 1-30 (MRTFLKFSTLVSKGVLVLVCSFFLTASSNA). Heme is bound by residues tyrosine 31, cysteine 51, cysteine 54, and histidine 55. A helical transmembrane segment spans residues 281 to 300 (IQGLLVFFLFVLLAQVFLVL).

The protein belongs to the cytochrome f family. In terms of assembly, the 4 large subunits of the cytochrome b6-f complex are cytochrome b6, subunit IV (17 kDa polypeptide, petD), cytochrome f and the Rieske protein, while the 4 small subunits are PetG, PetL, PetM and PetN. The complex functions as a dimer. Heme serves as cofactor.

The protein resides in the plastid. It is found in the chloroplast thylakoid membrane. Its function is as follows. Component of the cytochrome b6-f complex, which mediates electron transfer between photosystem II (PSII) and photosystem I (PSI), cyclic electron flow around PSI, and state transitions. The polypeptide is Cytochrome f (petA) (Chlorella vulgaris (Green alga)).